We begin with the raw amino-acid sequence, 839 residues long: Protein translocase subunit SecA (839 aa).

ATP contacts are provided by residues Gln86, 104–108 (GEGKT), and Asp493. A disordered region spans residues 794-839 (GIDMDNLQTSGPSDRPDPETSGDADPKNRAQRRAQEQERKRQNKKQ). Over residues 807-833 (DRPDPETSGDADPKNRAQRRAQEQERK) the composition is skewed to basic and acidic residues.

This sequence belongs to the SecA family. Monomer and homodimer. Part of the essential Sec protein translocation apparatus which comprises SecA, SecYEG and auxiliary proteins SecDF. Other proteins may also be involved.

Its subcellular location is the cell membrane. The protein resides in the cytoplasm. It catalyses the reaction ATP + H2O + cellular proteinSide 1 = ADP + phosphate + cellular proteinSide 2.. Part of the Sec protein translocase complex. Interacts with the SecYEG preprotein conducting channel. Has a central role in coupling the hydrolysis of ATP to the transfer of proteins into and across the cell membrane, serving as an ATP-driven molecular motor driving the stepwise translocation of polypeptide chains across the membrane. This is Protein translocase subunit SecA from Brevibacillus brevis (strain 47 / JCM 6285 / NBRC 100599).